We begin with the raw amino-acid sequence, 367 residues long: Serine O-succinyltransferase (367 aa).

An AB hydrolase-1 domain is found at 41–351 (NAVLILTGLS…SPQGHDAFLV (311 aa)). Positions 48–51 (GLSP) are important for substrate specificity. The active-site Nucleophile is Ser-146. Position 215 (Arg-215) interacts with substrate. Residues Asp-313 and His-346 contribute to the active site. A substrate-binding site is contributed by Asp-347.

The protein belongs to the AB hydrolase superfamily. MetX family. In terms of assembly, homodimer.

It localises to the cytoplasm. It catalyses the reaction succinyl-CoA + L-serine = O-succinyl-L-serine + CoA. It carries out the reaction L-homoserine + succinyl-CoA = O-succinyl-L-homoserine + CoA. It participates in amino-acid biosynthesis; L-cysteine biosynthesis; L-cysteine from L-serine: step 1/2. Transfers a succinyl group from succinyl-CoA to L-serine, forming succinyl-L-serine. In vitro, also has homoserine succinyl transferase activity. This is Serine O-succinyltransferase from Frateuria aurantia (strain ATCC 33424 / DSM 6220 / KCTC 2777 / LMG 1558 / NBRC 3245 / NCIMB 13370) (Acetobacter aurantius).